A 287-amino-acid polypeptide reads, in one-letter code: Diphthine methyl ester synthase (287 aa).

Residues Leu9, Asp84, Gly87, Ser112–Ile113, Leu163, Val221, and His248 each bind S-adenosyl-L-methionine.

Belongs to the diphthine synthase family.

It localises to the cytoplasm. The catalysed reaction is 2-[(3S)-amino-3-carboxypropyl]-L-histidyl-[translation elongation factor 2] + 4 S-adenosyl-L-methionine = diphthine methyl ester-[translation elongation factor 2] + 4 S-adenosyl-L-homocysteine + 3 H(+). Its pathway is protein modification; peptidyl-diphthamide biosynthesis. S-adenosyl-L-methionine-dependent methyltransferase that catalyzes four methylations of the modified target histidine residue in translation elongation factor 2 (EF-2), to form an intermediate called diphthine methyl ester. The four successive methylation reactions represent the second step of diphthamide biosynthesis. This Neurospora crassa (strain ATCC 24698 / 74-OR23-1A / CBS 708.71 / DSM 1257 / FGSC 987) protein is Diphthine methyl ester synthase (dph-5).